We begin with the raw amino-acid sequence, 302 residues long: Pantothenate synthetase (302 aa).

47-54 lines the ATP pocket; the sequence is MGALHEGH. His-54 acts as the Proton donor in catalysis. Residue Gln-79 coordinates (R)-pantoate. Gln-79 serves as a coordination point for beta-alanine. 165–168 contributes to the ATP binding site; sequence GEKD. (R)-pantoate is bound at residue Gln-171. ATP is bound by residues Val-194 and 202-205; that span reads LSSR.

Belongs to the pantothenate synthetase family. In terms of assembly, homodimer.

It localises to the cytoplasm. It catalyses the reaction (R)-pantoate + beta-alanine + ATP = (R)-pantothenate + AMP + diphosphate + H(+). It participates in cofactor biosynthesis; (R)-pantothenate biosynthesis; (R)-pantothenate from (R)-pantoate and beta-alanine: step 1/1. Functionally, catalyzes the condensation of pantoate with beta-alanine in an ATP-dependent reaction via a pantoyl-adenylate intermediate. This chain is Pantothenate synthetase, found in Saccharopolyspora erythraea (strain ATCC 11635 / DSM 40517 / JCM 4748 / NBRC 13426 / NCIMB 8594 / NRRL 2338).